The primary structure comprises 173 residues: Photosystem I assembly protein Ycf3 (173 aa).

3 TPR repeats span residues 35–68 (AYVYYRDGLSAQNDGDYAEALENYEEALKLEENS), 72–105 (SETLKNMAIIYMSNGEEERAIETYRKALEENPNQ), and 120–153 (GRIAEEGGEQDSADRWFDQAADVWTQAVRLNPGG).

This sequence belongs to the Ycf3 family.

It localises to the cellular thylakoid membrane. In terms of biological role, essential for the assembly of the photosystem I (PSI) complex. May act as a chaperone-like factor to guide the assembly of the PSI subunits. The sequence is that of Photosystem I assembly protein Ycf3 from Synechococcus sp. (strain CC9605).